The sequence spans 137 residues: NADH-quinone oxidoreductase subunit A 2 (137 aa).

3 helical membrane passes run 12 to 32 (WGFAAFLLGVVGLLAFMLGVS), 66 to 86 (FYLVAMLFVIFDVEALFLFAW), and 95 to 115 (WAGLIEATIFIAILLAGLVYL).

The protein belongs to the complex I subunit 3 family. As to quaternary structure, NDH-1 is composed of 13 different subunits. Subunits NuoA, H, J, K, L, M, N constitute the membrane sector of the complex.

The protein localises to the cell inner membrane. The enzyme catalyses a quinone + NADH + 5 H(+)(in) = a quinol + NAD(+) + 4 H(+)(out). Functionally, NDH-1 shuttles electrons from NADH, via FMN and iron-sulfur (Fe-S) centers, to quinones in the respiratory chain. The immediate electron acceptor for the enzyme in this species is believed to be ubiquinone. Couples the redox reaction to proton translocation (for every two electrons transferred, four hydrogen ions are translocated across the cytoplasmic membrane), and thus conserves the redox energy in a proton gradient. The sequence is that of NADH-quinone oxidoreductase subunit A 2 from Pseudomonas aeruginosa (strain ATCC 15692 / DSM 22644 / CIP 104116 / JCM 14847 / LMG 12228 / 1C / PRS 101 / PAO1).